The chain runs to 28 residues: Morintide mO6 (28 aa).

The region spanning 1-28 (NGLCCSQYGFCGTTSAYCSRANGCQSNC) is the Chitin-binding type-1 domain. Disulfide bonds link Cys-4-Cys-18 and Cys-24-Cys-28.

Seeds (at protein level).

In terms of biological role, chitin-binding protein which functions in defense against chitin-containing fungal pathogens. This Moringa oleifera (Horseradish tree) protein is Morintide mO6.